The following is a 157-amino-acid chain: 6,7-dimethyl-8-ribityllumazine synthase (157 aa).

5-amino-6-(D-ribitylamino)uracil contacts are provided by residues Phe-22, 56-58 (AFE), and 81-83 (VLI). Residue 86–87 (ET) coordinates (2S)-2-hydroxy-3-oxobutyl phosphate. His-89 (proton donor) is an active-site residue. A 5-amino-6-(D-ribitylamino)uracil-binding site is contributed by Phe-114. Residue Arg-128 coordinates (2S)-2-hydroxy-3-oxobutyl phosphate.

This sequence belongs to the DMRL synthase family.

The enzyme catalyses (2S)-2-hydroxy-3-oxobutyl phosphate + 5-amino-6-(D-ribitylamino)uracil = 6,7-dimethyl-8-(1-D-ribityl)lumazine + phosphate + 2 H2O + H(+). It participates in cofactor biosynthesis; riboflavin biosynthesis; riboflavin from 2-hydroxy-3-oxobutyl phosphate and 5-amino-6-(D-ribitylamino)uracil: step 1/2. Its function is as follows. Catalyzes the formation of 6,7-dimethyl-8-ribityllumazine by condensation of 5-amino-6-(D-ribitylamino)uracil with 3,4-dihydroxy-2-butanone 4-phosphate. This is the penultimate step in the biosynthesis of riboflavin. In Chlamydia muridarum (strain MoPn / Nigg), this protein is 6,7-dimethyl-8-ribityllumazine synthase.